The primary structure comprises 213 residues: Kynurenine formamidase (213 aa).

Trp-18 contributes to the substrate binding site. Zn(2+)-binding residues include His-48, His-52, and Asp-54. The active-site Proton donor/acceptor is His-58. The Zn(2+) site is built by His-160 and Glu-172.

It belongs to the Cyclase 1 superfamily. KynB family. Homodimer. Requires Zn(2+) as cofactor.

It carries out the reaction N-formyl-L-kynurenine + H2O = L-kynurenine + formate + H(+). The protein operates within amino-acid degradation; L-tryptophan degradation via kynurenine pathway; L-kynurenine from L-tryptophan: step 2/2. In terms of biological role, catalyzes the hydrolysis of N-formyl-L-kynurenine to L-kynurenine, the second step in the kynurenine pathway of tryptophan degradation. This is Kynurenine formamidase from Burkholderia pseudomallei (strain 1710b).